Reading from the N-terminus, the 236-residue chain is tRNA (guanine-N(1)-)-methyltransferase (236 aa).

S-adenosyl-L-methionine contacts are provided by residues Gly-113 and 133-138; that span reads IGDYVL.

The protein belongs to the RNA methyltransferase TrmD family. Homodimer.

It is found in the cytoplasm. It catalyses the reaction guanosine(37) in tRNA + S-adenosyl-L-methionine = N(1)-methylguanosine(37) in tRNA + S-adenosyl-L-homocysteine + H(+). Its function is as follows. Specifically methylates guanosine-37 in various tRNAs. This is tRNA (guanine-N(1)-)-methyltransferase from Lachnospira eligens (strain ATCC 27750 / DSM 3376 / VPI C15-48 / C15-B4) (Eubacterium eligens).